Here is a 369-residue protein sequence, read N- to C-terminus: C2 calcium-dependent domain-containing protein 4A (369 aa).

Disordered regions lie at residues Pro-151–Pro-176 and Arg-197–Glu-240. The span at Ala-153–Pro-168 shows a compositional bias: pro residues. A compositionally biased stretch (low complexity) spans Ser-220–Pro-237. In terms of domain architecture, C2 spans Ala-253–Leu-369.

It belongs to the C2CD4 family. Specifically expressed in endothelial cells.

The protein resides in the nucleus. May be involved in inflammatory process. May regulate cell architecture and adhesion. The sequence is that of C2 calcium-dependent domain-containing protein 4A (C2CD4A) from Homo sapiens (Human).